A 294-amino-acid polypeptide reads, in one-letter code: uncharacterized protein (294 aa).

This is an uncharacterized protein from Bacillus subtilis (strain 168).